A 123-amino-acid chain; its full sequence is MEPCELQNELVSAEGRNRKAVLCQRCGSRVLQPGTALFSRRQLFLPSMRKKPDLVDGSNPDGDVLEEHWLVNDMFIFENVGFTKDVGNVKFLVCADCEIGPIGWHCLDDKNSFYVALERVSHE.

At Met-1 the chain carries N-acetylmethionine. The MSS4 domain occupies 9-123; that stretch reads ELVSAEGRNR…YVALERVSHE (115 aa). 4 residues coordinate Zn(2+): Cys-23, Cys-26, Cys-94, and Cys-97.

Belongs to the DSS4/MSS4 family. Interacts with RAB8A. In terms of tissue distribution, ubiquitous.

In terms of biological role, guanine-nucleotide-releasing protein that acts on members of the SEC4/YPT1/RAB subfamily. Stimulates GDP release from both YPT1, RAB3A and RAB10, but is less active on these proteins than on the SEC4 protein. Might play a general role in vesicular transport. The sequence is that of Guanine nucleotide exchange factor MSS4 (Rabif) from Rattus norvegicus (Rat).